The chain runs to 300 residues: Probable low-salt glycan biosynthesis reductase Agl14 (300 aa).

Residues G10–L12, D46–I47, and A70–T72 each bind NADH. NADPH-binding positions include L11–L12, D46–I47, A70–T72, Y109, Y135, and K139. Positions 135 and 139 each coordinate NADH. The active-site Proton donor/acceptor is Y135.

The protein belongs to the dTDP-4-dehydrorhamnose reductase family.

It functions in the pathway protein modification; protein glycosylation. The protein operates within cell surface structure biogenesis; S-layer biogenesis. Its function is as follows. Reductase involved in N-glycan biosynthetic pathway that takes place under low-salt conditions (1.75 M instead of 3.4 M). Participates in the formation of the tetrasaccharide present at 'Asn-532' of S-layer glycoprotein Csg, consisting of a sulfated hexose, 2 hexoses and rhamnose. Involved in the addition of final rhamnose (sugar 4) of the tetrasaccharide on the dolichol phosphate carrier. This is Probable low-salt glycan biosynthesis reductase Agl14 (agl14) from Haloferax volcanii (strain ATCC 29605 / DSM 3757 / JCM 8879 / NBRC 14742 / NCIMB 2012 / VKM B-1768 / DS2) (Halobacterium volcanii).